Reading from the N-terminus, the 266-residue chain is Derlin-1 (266 aa).

Residues 1 to 20 lie on the Cytoplasmic side of the membrane; it reads MSSPGEFYNSLPPITKAYGT. A helical transmembrane segment spans residues 21–41; sequence LCFFTTVATQLGLVAPVHIAL. Topologically, residues 42-55 are lumenal; that stretch reads IPELVLKQFQIWRL. The helical transmembrane segment at 56 to 76 threads the bilayer; that stretch reads ITNLFFLGGFSINFGIRLLMI. The Cytoplasmic segment spans residues 77-94; that stretch reads ARYGVQLEKGPFERRTAD. Residues 95–115 form a helical membrane-spanning segment; it reads FLWMMIFGSFTLLVLSVIPFF. Over 116 to 156 the chain is Lumenal; it reads WTPFLGVSLVFMLLYLWSREFPNANISLYGLVTLKAFYLPW. The chain crosses the membrane as a helical span at residues 157 to 177; sequence AMLALDVIFGSPIMPDLLGII. Topologically, residues 178–266 are cytoplasmic; that stretch reads AGHLYYFLTV…FRGRSYRLTD (89 aa). The segment at 235-266 is disordered; that stretch reads GGVGGGGAYSSARAPPESSNTAFRGRSYRLTD.

This sequence belongs to the derlin family.

The protein resides in the endoplasmic reticulum membrane. Its function is as follows. May be involved in the degradation process of specific misfolded endoplasmic reticulum (ER) luminal proteins. The polypeptide is Derlin-1 (DER1) (Arabidopsis thaliana (Mouse-ear cress)).